A 468-amino-acid polypeptide reads, in one-letter code: Tripartite motif-containing protein 75 (468 aa).

An RING-type zinc finger spans residues 16 to 57; it reads CSICLDYLSDPVTIECGHNFCRSCIQQSWLDLQELFPCPVCR. Residues 92-133 form a B box-type zinc finger; that stretch reads EETTLCEKHNQPLSVFCKEDLMVLCPLCTQPPDHQGHHVRPI. The Zn(2+) site is built by C97, H100, C119, and H125. Positions 170 to 222 form a coiled coil; sequence LELREMVENQRQELSSEFEHLNQFLDREQQAVLSRLAEEEKDNQQKLSANITA. Residues 276 to 468 form the B30.2/SPRY domain; the sequence is CSFPPQYSAL…LRICTGTVCE (193 aa).

It belongs to the TRIM/RBCC family.

The protein resides in the cytoplasm. Its subcellular location is the cytoskeleton. It is found in the spindle. Functionally, may play a role in female meiosis. This Homo sapiens (Human) protein is Tripartite motif-containing protein 75.